A 180-amino-acid polypeptide reads, in one-letter code: ATP-dependent protease subunit HslV (180 aa).

Thr5 is a catalytic residue. Na(+)-binding residues include Gly161, Cys164, and Thr167.

This sequence belongs to the peptidase T1B family. HslV subfamily. As to quaternary structure, a double ring-shaped homohexamer of HslV is capped on each side by a ring-shaped HslU homohexamer. The assembly of the HslU/HslV complex is dependent on binding of ATP.

It is found in the cytoplasm. The catalysed reaction is ATP-dependent cleavage of peptide bonds with broad specificity.. Allosterically activated by HslU binding. Its function is as follows. Protease subunit of a proteasome-like degradation complex believed to be a general protein degrading machinery. The sequence is that of ATP-dependent protease subunit HslV from Campylobacter jejuni subsp. jejuni serotype O:6 (strain 81116 / NCTC 11828).